The chain runs to 446 residues: Exodeoxyribonuclease 7 large subunit (446 aa).

The protein belongs to the XseA family. In terms of assembly, heterooligomer composed of large and small subunits.

It is found in the cytoplasm. The enzyme catalyses Exonucleolytic cleavage in either 5'- to 3'- or 3'- to 5'-direction to yield nucleoside 5'-phosphates.. Functionally, bidirectionally degrades single-stranded DNA into large acid-insoluble oligonucleotides, which are then degraded further into small acid-soluble oligonucleotides. The sequence is that of Exodeoxyribonuclease 7 large subunit from Xanthomonas campestris pv. campestris (strain B100).